The sequence spans 233 residues: Ribosomal RNA small subunit methyltransferase G (233 aa).

Residues Gly-96, Leu-101, 146-147, and Arg-160 contribute to the S-adenosyl-L-methionine site; that span reads LE.

Belongs to the methyltransferase superfamily. RNA methyltransferase RsmG family.

The protein resides in the cytoplasm. The enzyme catalyses guanosine(527) in 16S rRNA + S-adenosyl-L-methionine = N(7)-methylguanosine(527) in 16S rRNA + S-adenosyl-L-homocysteine. In terms of biological role, specifically methylates the N7 position of guanine in position 527 of 16S rRNA. The chain is Ribosomal RNA small subunit methyltransferase G from Sphingopyxis alaskensis (strain DSM 13593 / LMG 18877 / RB2256) (Sphingomonas alaskensis).